A 1357-amino-acid chain; its full sequence is DNA-directed RNA polymerase subunit beta (1357 aa).

It belongs to the RNA polymerase beta chain family. As to quaternary structure, the RNAP catalytic core consists of 2 alpha, 1 beta, 1 beta' and 1 omega subunit. When a sigma factor is associated with the core the holoenzyme is formed, which can initiate transcription.

The enzyme catalyses RNA(n) + a ribonucleoside 5'-triphosphate = RNA(n+1) + diphosphate. Functionally, DNA-dependent RNA polymerase catalyzes the transcription of DNA into RNA using the four ribonucleoside triphosphates as substrates. The sequence is that of DNA-directed RNA polymerase subunit beta from Pseudomonas putida (strain GB-1).